Here is a 592-residue protein sequence, read N- to C-terminus: Transducer of Cdc42-dependent actin assembly protein 1 homolog (592 aa).

In terms of domain architecture, F-BAR spans 3–267 (DSCSWDQLWD…DIGLIDPSRD (265 aa)). 2 disordered regions span residues 343 to 366 (FGGG…QQRA) and 447 to 519 (SATS…DELY). Residues 359–436 (TLPPQQRARK…IQKFKILLDD (78 aa)) enclose the REM-1 domain. Positions 363-441 (QQRARKIAGK…ILLDDVNAQL (79 aa)) form a coiled coil. Polar residues predominate over residues 447-457 (SATSVGGSDTP). Residues 459–474 (SIRSVSSASSGVTSRV) show a composition bias toward low complexity. Residues 495–510 (FSGSNGGSDTDPTING) are compositionally biased toward polar residues. In terms of domain architecture, SH3 spans 527–589 (PVLGEAIAQF…PSSYLKVTWF (63 aa)).

This sequence belongs to the FNBP1 family. As to quaternary structure, interacts (via SH3 domain) with wsp-1. Interacts with cdc-42 and (via SH3 domain) with wve-1. As to expression, expressed in the germline and specifically in the gonads.

The protein localises to the cell junction. Its subcellular location is the apical cell membrane. It localises to the basolateral cell membrane. It is found in the cytoplasmic vesicle. The protein resides in the cytoplasm. The protein localises to the perinuclear region. Its subcellular location is the recycling endosome. Functionally, plays a role in protein trafficking, actin organization and embryonic morphogenesis. Potentially acts as a cdc-42 effector. May play a role in hypodermal P-cell nuclear positioning. Together with toca-2, is required for protein trafficking regulating yolk protein clathrin-mediated endocytosis by oocytes during oogenesis and retrograde recycling and the sorting of recycling endosome cargo proteins such as mig-14. Also, together with toca-2, controls the distribution of actin at cell junctions. The chain is Transducer of Cdc42-dependent actin assembly protein 1 homolog from Caenorhabditis elegans.